The sequence spans 159 residues: Superoxide dismutase [Cu-Zn] (159 aa).

The Cu cation site is built by H47, H49, and H64. An intrachain disulfide couples C58 to C150. Residues H64, H72, H81, and D84 each contribute to the Zn(2+) site. Residue H121 coordinates Cu cation.

Belongs to the Cu-Zn superoxide dismutase family. Cu cation serves as cofactor. Requires Zn(2+) as cofactor.

It localises to the cytoplasm. The catalysed reaction is 2 superoxide + 2 H(+) = H2O2 + O2. Its function is as follows. Destroys radicals which are normally produced within the cells and which are toxic to biological systems. This chain is Superoxide dismutase [Cu-Zn] (SOD), found in Haemonchus contortus (Barber pole worm).